The following is a 338-amino-acid chain: tRNA N6-adenosine threonylcarbamoyltransferase (338 aa).

Positions 114 and 118 each coordinate Fe cation. Residues 137-141 (IVSGG), Asp-170, Gly-183, Asp-187, and Asn-277 contribute to the substrate site. Residue Asp-305 coordinates Fe cation.

It belongs to the KAE1 / TsaD family. The cofactor is Fe(2+).

It is found in the cytoplasm. It catalyses the reaction L-threonylcarbamoyladenylate + adenosine(37) in tRNA = N(6)-L-threonylcarbamoyladenosine(37) in tRNA + AMP + H(+). Required for the formation of a threonylcarbamoyl group on adenosine at position 37 (t(6)A37) in tRNAs that read codons beginning with adenine. Is involved in the transfer of the threonylcarbamoyl moiety of threonylcarbamoyl-AMP (TC-AMP) to the N6 group of A37, together with TsaE and TsaB. TsaD likely plays a direct catalytic role in this reaction. This Clostridioides difficile (strain 630) (Peptoclostridium difficile) protein is tRNA N6-adenosine threonylcarbamoyltransferase.